A 340-amino-acid polypeptide reads, in one-letter code: Alcohol dehydrogenase (340 aa).

7 residues coordinate Zn(2+): C37, H58, C89, C92, C95, C103, and C145.

Belongs to the zinc-containing alcohol dehydrogenase family. The cofactor is Zn(2+).

The enzyme catalyses a primary alcohol + NAD(+) = an aldehyde + NADH + H(+). The catalysed reaction is a secondary alcohol + NAD(+) = a ketone + NADH + H(+). The protein is Alcohol dehydrogenase (adh) of Staphylococcus epidermidis (strain ATCC 35984 / DSM 28319 / BCRC 17069 / CCUG 31568 / BM 3577 / RP62A).